The chain runs to 357 residues: Histidinol-phosphate aminotransferase 1 (357 aa).

Residue Lys210 is modified to N6-(pyridoxal phosphate)lysine.

The protein belongs to the class-II pyridoxal-phosphate-dependent aminotransferase family. Histidinol-phosphate aminotransferase subfamily. Homodimer. The cofactor is pyridoxal 5'-phosphate.

The catalysed reaction is L-histidinol phosphate + 2-oxoglutarate = 3-(imidazol-4-yl)-2-oxopropyl phosphate + L-glutamate. Its pathway is amino-acid biosynthesis; L-histidine biosynthesis; L-histidine from 5-phospho-alpha-D-ribose 1-diphosphate: step 7/9. This is Histidinol-phosphate aminotransferase 1 from Methylococcus capsulatus (strain ATCC 33009 / NCIMB 11132 / Bath).